The primary structure comprises 357 residues: DNA replication and repair protein RecF (357 aa).

Residue 30–37 participates in ATP binding; it reads GANGSGKT.

This sequence belongs to the RecF family.

The protein localises to the cytoplasm. Functionally, the RecF protein is involved in DNA metabolism; it is required for DNA replication and normal SOS inducibility. RecF binds preferentially to single-stranded, linear DNA. It also seems to bind ATP. The sequence is that of DNA replication and repair protein RecF from Enterobacter sp. (strain 638).